Reading from the N-terminus, the 312-residue chain is DNA-directed RNA polymerase subunit alpha (312 aa).

Residues 1–229 are alpha N-terminal domain (alpha-NTD); the sequence is MLQYQIDRVD…ALFQPLATVT (229 aa). The segment at 241–312 is alpha C-terminal domain (alpha-CTD); sequence SAESQIPLEE…ISLPQSRTTA (72 aa).

The protein belongs to the RNA polymerase alpha chain family. As to quaternary structure, in cyanobacteria the RNAP catalytic core is composed of 2 alpha, 1 beta, 1 beta', 1 gamma and 1 omega subunit. When a sigma factor is associated with the core the holoenzyme is formed, which can initiate transcription.

It catalyses the reaction RNA(n) + a ribonucleoside 5'-triphosphate = RNA(n+1) + diphosphate. DNA-dependent RNA polymerase catalyzes the transcription of DNA into RNA using the four ribonucleoside triphosphates as substrates. The protein is DNA-directed RNA polymerase subunit alpha of Synechococcus sp. (strain RCC307).